The following is a 211-amino-acid chain: Large ribosomal subunit protein uL3 (211 aa).

N5-methylglutamine is present on Gln-150.

The protein belongs to the universal ribosomal protein uL3 family. As to quaternary structure, part of the 50S ribosomal subunit. Forms a cluster with proteins L14 and L19. Methylated by PrmB.

Functionally, one of the primary rRNA binding proteins, it binds directly near the 3'-end of the 23S rRNA, where it nucleates assembly of the 50S subunit. This is Large ribosomal subunit protein uL3 from Pseudomonas fluorescens (strain Pf0-1).